A 142-amino-acid polypeptide reads, in one-letter code: Large ribosomal subunit protein uL13 (142 aa).

This sequence belongs to the universal ribosomal protein uL13 family. In terms of assembly, part of the 50S ribosomal subunit.

This protein is one of the early assembly proteins of the 50S ribosomal subunit, although it is not seen to bind rRNA by itself. It is important during the early stages of 50S assembly. The sequence is that of Large ribosomal subunit protein uL13 from Erwinia tasmaniensis (strain DSM 17950 / CFBP 7177 / CIP 109463 / NCPPB 4357 / Et1/99).